A 354-amino-acid polypeptide reads, in one-letter code: Ferrochelatase (354 aa).

Positions 204 and 306 each coordinate Fe cation.

This sequence belongs to the ferrochelatase family.

The protein resides in the cytoplasm. The catalysed reaction is heme b + 2 H(+) = protoporphyrin IX + Fe(2+). It functions in the pathway porphyrin-containing compound metabolism; protoheme biosynthesis; protoheme from protoporphyrin-IX: step 1/1. Functionally, catalyzes the ferrous insertion into protoporphyrin IX. The polypeptide is Ferrochelatase (Coxiella burnetii (strain Dugway 5J108-111)).